Reading from the N-terminus, the 200-residue chain is Putative glucose-6-phosphate isomerase 2 (200 aa).

H92, H94, E101, and H140 together coordinate Fe cation.

The protein belongs to the archaeal-type GPI family. As to quaternary structure, homodimer. The cofactor is Fe cation.

The protein localises to the cytoplasm. It carries out the reaction alpha-D-glucose 6-phosphate = beta-D-fructose 6-phosphate. Its pathway is carbohydrate degradation; glycolysis; D-glyceraldehyde 3-phosphate and glycerone phosphate from D-glucose: step 2/4. This is Putative glucose-6-phosphate isomerase 2 (pgiA2) from Rhizobium meliloti (strain 1021) (Ensifer meliloti).